Consider the following 590-residue polypeptide: J protein JJJ1 (590 aa).

A J domain is found at 3–72; it reads TCYYELLGVE…RAWYDSHKEQ (70 aa). Positions 269–284 are enriched in basic and acidic residues; it reads EQRKLKEQQRKNELNN. Positions 269-293 are disordered; the sequence is EQRKLKEQQRKNELNNRRKFGNDNN. The C2H2-type 1 zinc-finger motif lies at 338–362; the sequence is YECFICNKTFKSEKQLKNHINTKLH. S393 carries the phosphoserine modification. A disordered region spans residues 441 to 546; it reads EVEDVSSDEN…TLPSSMSPTS (106 aa). Residues 455–467 show a composition bias toward basic residues; that stretch reads TKNKKKRKKKKKA. Positions 480–489 are enriched in basic and acidic residues; the sequence is DDTKDKRSNE. T504 is modified (phosphothreonine). The segment covering 513–527 has biased composition (basic residues); sequence KAKKKKGKQPKKNSK. Residues 528-546 are compositionally biased toward low complexity; the sequence is STKSTPSLSTLPSSMSPTS. A C2H2-type 2 zinc finger spans residues 549-573; the sequence is EVCTTCGESFDSRNKLFNHVKIAGH.

Its subcellular location is the nucleus. The polypeptide is J protein JJJ1 (JJJ1) (Saccharomyces cerevisiae (strain ATCC 204508 / S288c) (Baker's yeast)).